Here is a 642-residue protein sequence, read N- to C-terminus: Chaperone protein DnaK (642 aa).

Thr-199 is subject to Phosphothreonine; by autocatalysis. Basic and acidic residues predominate over residues 570–585; that stretch reads EELEQASKDGDKEAID. The disordered stretch occupies residues 570 to 642; that stretch reads EELEQASKDG…FEEVKDDDKK (73 aa). The segment covering 600–620 has biased composition (low complexity); the sequence is EAAQQQQAQQGAEGAAGGEQQ. Residues 627–642 show a composition bias toward acidic residues; the sequence is DVVDAEFEEVKDDDKK.

Belongs to the heat shock protein 70 family.

In terms of biological role, acts as a chaperone. The sequence is that of Chaperone protein DnaK from Idiomarina loihiensis (strain ATCC BAA-735 / DSM 15497 / L2-TR).